The following is a 377-amino-acid chain: Pulmonary surfactant-associated protein B (377 aa).

Residues 1–22 (MAKSHLLQWLLLLPTLCCPGAA) form the signal peptide. A propeptide spanning residues 23–191 (ITSASSLECA…PHTQDFSEQQ (169 aa)) is cleaved from the precursor. The Saposin A-type domain maps to 24 to 64 (TSASSLECAQGPQFWCQSLEHAVQCRALGHCLQEVWGHAGA). 3 consecutive Saposin B-type domains span residues 64-146 (ANDL…PRGQ), 195-272 (PLPF…STED), and 291-366 (QDTE…EAPA). Cystine bridges form between Cys68–Cys142, Cys71–Cys136, Cys99–Cys111, Cys199–Cys268, Cys202–Cys262, Cys226–Cys237, Cys295–Cys362, Cys298–Cys356, and Cys321–Cys331. Positions 271–377 (EDAMGPALPA…PLQCFQTPHL (107 aa)) are excised as a propeptide. N-linked (GlcNAc...) asparagine glycosylation occurs at Asn307.

In terms of assembly, homodimer; disulfide-linked.

It localises to the secreted. The protein resides in the extracellular space. The protein localises to the surface film. Functionally, pulmonary surfactant-associated proteins promote alveolar stability by lowering the surface tension at the air-liquid interface in the peripheral air spaces. SP-B increases the collapse pressure of palmitic acid to nearly 70 millinewtons per meter. The chain is Pulmonary surfactant-associated protein B (Sftpb) from Mus musculus (Mouse).